The following is a 667-amino-acid chain: WD repeat-containing protein 48 homolog (667 aa).

WD repeat units follow at residues Gln-26–Tyr-65, His-71–Thr-110, Thr-113–Ala-152, Gly-164–Lys-203, Gly-206–Thr-245, Val-248–Leu-287, Glu-290–Leu-329, and Lys-349–Glu-388. A disordered region spans residues Glu-591 to Ser-615.

This sequence belongs to the WD repeat WDR48 family. In terms of assembly, catalytic component of the Usp12-46 deubiquitylase complex consisting of Usp12-46, Wdr20 and Uaf1; regulatory subunit that, together wtih Wdr20, stabilizes Usp12-46. The Usp12-46 deubiquitylase complex associates with arr/arrow; the interaction leads to deubiquitination and stabilization of arr/arrow.

Functionally, regulatory component of the Usp12-46 deubiquitylase complex. activates deubiquitination by increasing the catalytic turnover without increasing the affinity of deubiquitinating enzymes for the substrate. The complex deubiquitylates the wg/wingless-signaling receptor arr/arrow, which stabilizes the receptor and increases its concentration at the cell surface; this enhances the sensitivity of cells to wg/wingless-signal stimulation. This increases the amplitude and spatial range of the signaling response to the wg/wingless morphogen gradient, facilitating the precise concentration-dependent regulation of its target genes. Together with Wdr20 and Usp12-46 required for wg/wingless-mediated signaling in the wing imaginal disc and for wg/wingless-dependent regulation of intestinal stem cell proliferation. The protein is WD repeat-containing protein 48 homolog of Drosophila virilis (Fruit fly).